Reading from the N-terminus, the 597-residue chain is MDHIRNFSIIAHIDHGKSTLADRIIQVCGGLAAREMEAQVLDSMDIERERGITIKAQTAALSYRARDGKVYNLNLIDTPGHVDFSYEVSRSLSACEGALLVVDASQGVEAQTVANCYTAIELGVEVVPVLNKIDLPAANPENAIEEIEDVIGIDATDATRCSAKTGLGVEDVLEALIAKVPPPKGDPAAPLQALIIDSWFDNYVGVVMLVRIVNGTLRPKDKIKMMATGAQYPVEHVGVFTPKSRNLESLSAGQVGFIIAGIKELTAAKVGDTVTHVAKPATEPLPGFKEVKPQVFAGLYPVEANQYDALRESLEKLKLNDASLQYEPEVSQALGFGFRCGFLGLLHMEIVQERLEREFDMDLITTAPTVVYEVVQSDGSTIMVENPAKMPEPGRIAEVREPIVTVNLYMPQDYVGSVITLCEQKRGSQINMQYHGRQVQLTYEIPMAEIVLDFFDRLKSVSRGYASMDYEFKEYRSSDVVKVDMLINGDKVDALSIIVHRSQSQYRGREVAAKMREIIPRQMYDVAIQAAIGAHIVARENIKALRKNVLAKCYGGDITRKKKLLEKQKEGKKRMKQVGSVEIPQEAFLAILRVEDK.

The tr-type G domain maps to 2-184; that stretch reads DHIRNFSIIA…ALIAKVPPPK (183 aa). GTP-binding positions include 14 to 19 and 131 to 134; these read DHGKST and NKID.

It belongs to the TRAFAC class translation factor GTPase superfamily. Classic translation factor GTPase family. LepA subfamily.

It is found in the cell inner membrane. The enzyme catalyses GTP + H2O = GDP + phosphate + H(+). In terms of biological role, required for accurate and efficient protein synthesis under certain stress conditions. May act as a fidelity factor of the translation reaction, by catalyzing a one-codon backward translocation of tRNAs on improperly translocated ribosomes. Back-translocation proceeds from a post-translocation (POST) complex to a pre-translocation (PRE) complex, thus giving elongation factor G a second chance to translocate the tRNAs correctly. Binds to ribosomes in a GTP-dependent manner. The chain is Elongation factor 4 from Burkholderia vietnamiensis (strain G4 / LMG 22486) (Burkholderia cepacia (strain R1808)).